Reading from the N-terminus, the 151-residue chain is uncharacterized protein (151 aa).

Residues 2–133 (KTLIVEDNPK…VFVEAVHYSQ (132 aa)) form the Response regulatory domain. 4-aspartylphosphate is present on Asp53.

This is an uncharacterized protein from Sinorhizobium fredii (strain NBRC 101917 / NGR234).